Consider the following 972-residue polypeptide: Leucine--tRNA ligase (972 aa).

The 'HIGH' region signature appears at 78–89; it reads PYPSGDGLHVGH. The 'KMSKS' region motif lies at 741–745; the sequence is KIGKS. An ATP-binding site is contributed by Lys-744.

Belongs to the class-I aminoacyl-tRNA synthetase family.

It localises to the cytoplasm. It carries out the reaction tRNA(Leu) + L-leucine + ATP = L-leucyl-tRNA(Leu) + AMP + diphosphate. The protein is Leucine--tRNA ligase of Mycobacterium leprae (strain Br4923).